Reading from the N-terminus, the 773-residue chain is Mitogen-activated protein kinase kinase kinase 9 (773 aa).

The segment covering 1–14 (MKKSSDKSPVRQHD) has biased composition (basic and acidic residues). The tract at residues 1-35 (MKKSSDKSPVRQHDTATQINSDAVSSSTSFTDSDS) is disordered. Positions 21-35 (SDAVSSSTSFTDSDS) are enriched in low complexity. Residues serine 79 and serine 150 each carry the phosphoserine modification. A regulatory region region spans residues 100 to 493 (FDKILALMKK…VSNTSPICVS (394 aa)). Position 365 is a phosphoserine; by MAPK4 (serine 365). The interval 426-455 (EIVRRPSSSSSSENGCDEEEAEDDKVEKEE) is disordered. Residues 440–449 (GCDEEEAEDD) are compositionally biased toward acidic residues. The Protein kinase domain maps to 501–755 (WQKGQLLRQG…ATELLNHPFV (255 aa)). ATP-binding positions include 507-515 (LRQGSFGSV) and lysine 529. The active-site Proton acceptor is the aspartate 624. Residue serine 768 is modified to Phosphoserine.

It belongs to the protein kinase superfamily. STE Ser/Thr protein kinase family. MAP kinase kinase kinase subfamily. As to quaternary structure, interacts with MPK4. Post-translationally, phosphorylated by MPK4 upon treatment with flg22. As to expression, expressed at least in rosette leaves (at protein level).

It carries out the reaction L-seryl-[protein] + ATP = O-phospho-L-seryl-[protein] + ADP + H(+). The enzyme catalyses L-threonyl-[protein] + ATP = O-phospho-L-threonyl-[protein] + ADP + H(+). In terms of biological role, triggers SUMM2-mediated immune responses, including cell death and defense responses. Probably inhibited by the MEKK1-MKK1/ MKK2-MPK4 kinase cascade to adjust plant defense. Seems to contribute in transducing external glutamate (L-Glu) signal that elicits large-scale changes in root architecture. This Arabidopsis thaliana (Mouse-ear cress) protein is Mitogen-activated protein kinase kinase kinase 9.